Consider the following 2566-residue polypeptide: Zinc finger protein GLI1 (2566 aa).

Disordered regions lie at residues His349–Ser375, Asp430–Gly508, and Lys985–Asp1046. 2 stretches are compositionally biased toward polar residues: residues Thr434–Thr444 and Trp457–His492. The segment covering Ser493–Gly508 has biased composition (low complexity). Over residues Trp993–Gly1016 the composition is skewed to polar residues. Positions Asp1023–Asp1035 are enriched in acidic residues. The C2H2-type 1; degenerate zinc finger occupies Arg1088–His1110. 3 consecutive C2H2-type zinc fingers follow at residues His1116 to His1140, Tyr1146 to His1171, and Tyr1177 to His1202. Disordered regions lie at residues Gly1254 to Ser1313, Leu1465 to Lys1491, Ser1650 to Glu1677, Ala1727 to Asp1791, and Met2067 to His2091. 2 stretches are compositionally biased toward low complexity: residues Asn1661–Glu1677 and Ala1727–Ser1743. The span at Asn1752 to Arg1769 shows a compositional bias: basic residues. Over residues Thr1770–Asp1791 the composition is skewed to polar residues. Residues Ser2070–Pro2090 show a composition bias toward low complexity.

Belongs to the GLI C2H2-type zinc-finger protein family. Expressed in female-paired or unpaired males along the ventral surface in neurons and skin tegument cells. In virgin and mature females, expressed bilaterally along the edges of the body in neurons. In mature females, also expressed in skin tegument cells.

It localises to the nucleus. Functionally, probable transcription factor which plays an essential role in males to trigger female sexual development by inducing NRPS expression in male. NRPS produces the pheromone beta-alanyl-tryptamine (BATT), which stimulates female sexual development. This is Zinc finger protein GLI1 from Schistosoma mansoni (Blood fluke).